Here is a 935-residue protein sequence, read N- to C-terminus: Protein translocase subunit SecA (935 aa).

Residues glutamine 86, 104-108, and aspartate 494 each bind ATP; that span reads GEGKT. The segment at 879–935 is disordered; the sequence is EQAATARAQQHSSAAVAAPEQGATQRGAFGQRVSAADDAAPANRAERRAQKKPTKRH.

This sequence belongs to the SecA family. As to quaternary structure, monomer and homodimer. Part of the essential Sec protein translocation apparatus which comprises SecA, SecYEG and auxiliary proteins SecDF. Other proteins may also be involved.

It localises to the cell membrane. Its subcellular location is the cytoplasm. It carries out the reaction ATP + H2O + cellular proteinSide 1 = ADP + phosphate + cellular proteinSide 2.. Its function is as follows. Part of the Sec protein translocase complex. Interacts with the SecYEG preprotein conducting channel. Has a central role in coupling the hydrolysis of ATP to the transfer of proteins into and across the cell membrane, serving as an ATP-driven molecular motor driving the stepwise translocation of polypeptide chains across the membrane. This chain is Protein translocase subunit SecA, found in Leifsonia xyli subsp. xyli (strain CTCB07).